The sequence spans 273 residues: Protein FAM210A (273 aa).

The span at 97–106 (SSSATSSGPP) shows a compositional bias: low complexity. Residues 97–116 (SSSATSSGPPSEKKEDPDPL) form a disordered region. Positions 107–116 (SEKKEDPDPL) are enriched in basic and acidic residues. A DUF1279 domain is found at 118–230 (DRSISLYQRF…GYMSTPPPVK (113 aa)). Residues 137 to 157 (VLIPVHLITSAVWFGTFYYAA) traverse the membrane as a helical segment. Residues 230 to 269 (KEYLQDKMEETKELLTEKMEETKDRLTEKLQETKGKVSLK) adopt a coiled-coil conformation. Residues 247–273 (KMEETKDRLTEKLQETKGKVSLKKKVE) form a disordered region.

This sequence belongs to the FAM210 family. As to quaternary structure, interacts with ATAD3A.

The protein resides in the membrane. Its subcellular location is the mitochondrion. The protein localises to the cytoplasm. May play a role in the structure and strength of both muscle and bone. This chain is Protein FAM210A (FAM210A), found in Bos taurus (Bovine).